The primary structure comprises 278 residues: 4-deoxy-L-threo-5-hexosulose-uronate ketol-isomerase (278 aa).

Residues His196, His198, Glu203, and His245 each contribute to the Zn(2+) site.

This sequence belongs to the KduI family. It depends on Zn(2+) as a cofactor.

The enzyme catalyses 5-dehydro-4-deoxy-D-glucuronate = 3-deoxy-D-glycero-2,5-hexodiulosonate. It functions in the pathway glycan metabolism; pectin degradation; 2-dehydro-3-deoxy-D-gluconate from pectin: step 4/5. Its function is as follows. Catalyzes the isomerization of 5-dehydro-4-deoxy-D-glucuronate to 3-deoxy-D-glycero-2,5-hexodiulosonate. This Shigella boydii serotype 4 (strain Sb227) protein is 4-deoxy-L-threo-5-hexosulose-uronate ketol-isomerase.